The chain runs to 318 residues: Acetyl-coenzyme A carboxylase carboxyl transferase subunit alpha (318 aa).

The CoA carboxyltransferase C-terminal domain occupies 43–293; it reads RSQTALRDLY…GDGIAAALKS (251 aa).

Belongs to the AccA family. Acetyl-CoA carboxylase is a heterohexamer composed of biotin carboxyl carrier protein (AccB), biotin carboxylase (AccC) and two subunits each of ACCase subunit alpha (AccA) and ACCase subunit beta (AccD).

It is found in the cytoplasm. It catalyses the reaction N(6)-carboxybiotinyl-L-lysyl-[protein] + acetyl-CoA = N(6)-biotinyl-L-lysyl-[protein] + malonyl-CoA. It participates in lipid metabolism; malonyl-CoA biosynthesis; malonyl-CoA from acetyl-CoA: step 1/1. In terms of biological role, component of the acetyl coenzyme A carboxylase (ACC) complex. First, biotin carboxylase catalyzes the carboxylation of biotin on its carrier protein (BCCP) and then the CO(2) group is transferred by the carboxyltransferase to acetyl-CoA to form malonyl-CoA. The polypeptide is Acetyl-coenzyme A carboxylase carboxyl transferase subunit alpha (Bartonella bacilliformis (strain ATCC 35685 / KC583 / Herrer 020/F12,63)).